The following is a 357-amino-acid chain: MLDKLAFLQEKYEDLGEKISDPEIINDQVQWQKLIKEHSEIEPIVMKYREYKTTQQALGETKEIMHDKATDAELKEMAKMEVEELEESIVEMEEQLKVMLLPTDPNDDKNVIVEIRGGAGGDEAGLFAAVLFRMYTRYAERSGWKVEMMSLNESGVGGYKEVIFMIKGKGAYSQLKYESGAHRVQRIPTTESGGRIHTSTATVVIMPEAEDVGEVNIDTNELRIDVFRSSGNGGQSVNTTDSAVRITHLPTGLVVSCQDGKSQLKNKEKAMKVLKSRLLDQMIQEQDAEISQDRRSKVGTGDRSERIRTYNFPQGRVTDHRINVTVYKLDAFLDGEINEMIDSLITSAQAEKMQEVQ.

Residue Gln-235 is modified to N5-methylglutamine.

Belongs to the prokaryotic/mitochondrial release factor family. Methylated by PrmC. Methylation increases the termination efficiency of RF1.

It localises to the cytoplasm. Functionally, peptide chain release factor 1 directs the termination of translation in response to the peptide chain termination codons UAG and UAA. The polypeptide is Peptide chain release factor 1 (Alkaliphilus metalliredigens (strain QYMF)).